The sequence spans 457 residues: Flavin-containing monooxygenase FMO GS-OX2 (457 aa).

17–22 contributes to the FAD binding site; it reads GAGAAG. 211–216 provides a ligand contact to NADP(+); that stretch reads GNFASG.

Belongs to the FMO family.

It carries out the reaction a (Z)-omega-(methylsulfanyl)-N-sulfo-alkylhydroximate S-glucoside + NADPH + O2 + H(+) = a (Z)-omega-(methylsulfinyl)-alkyl-glucosinolate + NADP(+) + H2O. In terms of biological role, catalyzes the conversion of methylthioalkyl glucosinolates of any chain length into methylsulfinylalkyl glucosinolates. This chain is Flavin-containing monooxygenase FMO GS-OX2 (FMOGS-OX2), found in Arabidopsis thaliana (Mouse-ear cress).